Here is a 186-residue protein sequence, read N- to C-terminus: Peptidyl-tRNA hydrolase (186 aa).

Tyr-14 lines the tRNA pocket. Catalysis depends on His-19, which acts as the Proton acceptor. 3 residues coordinate tRNA: Tyr-61, Asn-63, and Asn-107.

This sequence belongs to the PTH family. Monomer.

Its subcellular location is the cytoplasm. It carries out the reaction an N-acyl-L-alpha-aminoacyl-tRNA + H2O = an N-acyl-L-amino acid + a tRNA + H(+). Its function is as follows. Hydrolyzes ribosome-free peptidyl-tRNAs (with 1 or more amino acids incorporated), which drop off the ribosome during protein synthesis, or as a result of ribosome stalling. In terms of biological role, catalyzes the release of premature peptidyl moieties from peptidyl-tRNA molecules trapped in stalled 50S ribosomal subunits, and thus maintains levels of free tRNAs and 50S ribosomes. This chain is Peptidyl-tRNA hydrolase, found in Helicobacter pylori (strain P12).